The sequence spans 394 residues: Elongation factor Tu 2 (394 aa).

The region spanning Lys10 to Glu204 is the tr-type G domain. The tract at residues Gly19 to Thr26 is G1. Gly19–Thr26 lines the GTP pocket. Thr26 contributes to the Mg(2+) binding site. The segment at Gly60–Asn64 is G2. A G3 region spans residues Asp81–Gly84. GTP is bound by residues Asp81–His85 and Asn136–Asp139. Positions Asn136–Asp139 are G4. Residues Ser174–Leu176 form a G5 region.

Belongs to the TRAFAC class translation factor GTPase superfamily. Classic translation factor GTPase family. EF-Tu/EF-1A subfamily. In terms of assembly, monomer.

The protein localises to the cytoplasm. The catalysed reaction is GTP + H2O = GDP + phosphate + H(+). GTP hydrolase that promotes the GTP-dependent binding of aminoacyl-tRNA to the A-site of ribosomes during protein biosynthesis. This chain is Elongation factor Tu 2, found in Yersinia pseudotuberculosis serotype O:1b (strain IP 31758).